A 411-amino-acid chain; its full sequence is Copper resistance protein CRF1 (411 aa).

The segment at residues 1–40 is a DNA-binding region (copper-fist); the sequence is MVVIEGIKYACERCIRGHRVSSCTHTQQPLIRIKPKGRPA. 4 residues coordinate Zn(2+): Cys-11, Cys-14, Cys-23, and His-25. Composition is skewed to low complexity over residues 115–190, 205–214, 227–241, and 350–370; these read QQQA…PHSP, SSSSLSSLHS, SHNS…ANSP, and SVAA…PPSS. Disordered regions lie at residues 115 to 241 and 348 to 389; these read QQQA…ANSP and EMSV…VSPA.

It is found in the nucleus. Its function is as follows. Transcriptional regulator involved in resistance to high copper concentration. The protein is Copper resistance protein CRF1 (CRF1) of Yarrowia lipolytica (strain CLIB 122 / E 150) (Yeast).